A 232-amino-acid polypeptide reads, in one-letter code: Large ribosomal subunit protein uL1 (232 aa).

Belongs to the universal ribosomal protein uL1 family. In terms of assembly, part of the 50S ribosomal subunit.

In terms of biological role, binds directly to 23S rRNA. The L1 stalk is quite mobile in the ribosome, and is involved in E site tRNA release. Its function is as follows. Protein L1 is also a translational repressor protein, it controls the translation of the L11 operon by binding to its mRNA. The chain is Large ribosomal subunit protein uL1 from Variovorax paradoxus (strain S110).